A 727-amino-acid polypeptide reads, in one-letter code: Catalase-peroxidase (727 aa).

The segment at Met1–Asp26 is disordered. Residues Gly11–Asp26 show a composition bias toward polar residues. The segment at residues Trp96–Tyr219 is a cross-link (tryptophyl-tyrosyl-methioninium (Trp-Tyr) (with M-245)). The active-site Proton acceptor is the His97. The tryptophyl-tyrosyl-methioninium (Tyr-Met) (with W-96) cross-link spans Tyr219–Met245. His260 is a heme b binding site. The span at Ser346 to Lys362 shows a compositional bias: basic and acidic residues. The disordered stretch occupies residues Ser346–Pro365.

The protein belongs to the peroxidase family. Peroxidase/catalase subfamily. In terms of assembly, homodimer or homotetramer. Requires heme b as cofactor. In terms of processing, formation of the three residue Trp-Tyr-Met cross-link is important for the catalase, but not the peroxidase activity of the enzyme.

The enzyme catalyses H2O2 + AH2 = A + 2 H2O. The catalysed reaction is 2 H2O2 = O2 + 2 H2O. Bifunctional enzyme with both catalase and broad-spectrum peroxidase activity. The sequence is that of Catalase-peroxidase from Maridesulfovibrio salexigens (strain ATCC 14822 / DSM 2638 / NCIMB 8403 / VKM B-1763) (Desulfovibrio salexigens).